Here is a 283-residue protein sequence, read N- to C-terminus: Extracellular metalloprotease MGG_08041 (283 aa).

Positions 1-22 are cleaved as a signal peptide; it reads MQINVVKTFLFALAASSVSALA. N55 carries an N-linked (GlcNAc...) asparagine glycan. H197 provides a ligand contact to Zn(2+). Residue E198 is part of the active site. H201 serves as a coordination point for Zn(2+). Residues C233 and C260 are joined by a disulfide bond.

The protein belongs to the peptidase M43B family.

It is found in the secreted. In terms of biological role, secreted metalloproteinase that allows assimilation of proteinaceous substrates. The sequence is that of Extracellular metalloprotease MGG_08041 from Pyricularia oryzae (strain 70-15 / ATCC MYA-4617 / FGSC 8958) (Rice blast fungus).